Reading from the N-terminus, the 130-residue chain is MKMCDMFQTADWKTEKHVPAIECDDAVAADAFFPVTVSLGKEIAHPNTTEHHIRWIRCYFKPEGDKFSYEVGSFEFTAHGECAKGPNEGPVYTNHTVTFQLKIKTPGVLVASSFCNIHGLWESSKAVALK.

Positions 15, 17, 45, 51, 115, and 118 each coordinate Fe cation.

Belongs to the desulfoferrodoxin family. In terms of assembly, monomer. It depends on Fe cation as a cofactor.

The catalysed reaction is 2 superoxide + 2 H(+) = H2O2 + O2. In terms of biological role, non-heme iron protein. The protein is Neelaredoxin (nlr) of Megalodesulfovibrio gigas (Desulfovibrio gigas).